The primary structure comprises 210 residues: Fibrillarin-like rRNA/tRNA 2'-O-methyltransferase (210 aa).

The tract at residues 1 to 34 is disordered; that stretch reads MTLPSGVERHDFGGETSLATQGQPVYGERTDGDW. S-adenosyl-L-methionine contacts are provided by residues 71–72, 87–88, 112–113, and 132–135; these read TT, EF, DA, and DVAT.

The protein belongs to the methyltransferase superfamily. Fibrillarin family. As to quaternary structure, interacts with nop5. Component of box C/D small ribonucleoprotein (sRNP) particles that contain rpl7ae, FlpA and nop5, plus a guide RNA.

Its function is as follows. Involved in pre-rRNA and tRNA processing. Utilizes the methyl donor S-adenosyl-L-methionine to catalyze the site-specific 2'-hydroxyl methylation of ribose moieties in rRNA and tRNA. Site specificity is provided by a guide RNA that base pairs with the substrate. Methylation occurs at a characteristic distance from the sequence involved in base pairing with the guide RNA. This is Fibrillarin-like rRNA/tRNA 2'-O-methyltransferase from Haloarcula marismortui (strain ATCC 43049 / DSM 3752 / JCM 8966 / VKM B-1809) (Halobacterium marismortui).